Here is a 127-residue protein sequence, read N- to C-terminus: Major sperm protein 2 (127 aa).

An N-acetylalanine modification is found at Ala2. Residues 9 to 126 (DIHTQPGSKI…RRKNLPIEYN (118 aa)) form the MSP domain.

As to expression, sperm.

It is found in the cell projection. The protein resides in the pseudopodium. The protein localises to the cytoplasm. Its subcellular location is the cytoskeleton. Central component in molecular interactions underlying sperm crawling. Forms an extensive filament system that extends from sperm villipoda, along the leading edge of the pseudopod. This chain is Major sperm protein 2, found in Onchocerca volvulus.